The chain runs to 543 residues: Carboxypeptidase Y homolog A (543 aa).

Residues 1 to 17 (MKLLTTGLLASAALVAA) form the signal peptide. The propeptide occupies 18 to 124 (QEQQVLRADE…KLKNYDLRVK (107 aa)). 5 cysteine pairs are disulfide-bonded: C179–C419, C313–C327, C337–C360, C344–C353, and C382–C389. Residue N210 is glycosylated (N-linked (GlcNAc...) asparagine). Residue S266 is part of the active site. D458 is an active-site residue. N509 is a glycosylation site (N-linked (GlcNAc...) asparagine). H520 is an active-site residue.

It belongs to the peptidase S10 family.

The protein resides in the vacuole. The catalysed reaction is Release of a C-terminal amino acid with broad specificity.. Vacuolar carboxypeptidase involved in degradation of small peptides. Digests preferentially peptides containing an aliphatic or hydrophobic residue in P1' position, as well as methionine, leucine or phenylalanine in P1 position of ester substrate. The chain is Carboxypeptidase Y homolog A (CPYA) from Arthroderma gypseum (strain ATCC MYA-4604 / CBS 118893) (Microsporum gypseum).